Reading from the N-terminus, the 45-residue chain is Mu-conotoxin-like Cal 12.1.2d (45 aa).

4 disulfide bridges follow: cysteine 3/cysteine 16, cysteine 11/cysteine 28, cysteine 18/cysteine 33, and cysteine 27/cysteine 39. Tryptophan 17 is modified (6'-bromotryptophan). Proline 23 carries the post-translational modification 4-hydroxyproline. Tryptophan 37 and tryptophan 38 each carry 6'-bromotryptophan. Proline 40 carries the post-translational modification 4-hydroxyproline.

As to expression, expressed by the venom duct.

It localises to the secreted. Its function is as follows. Mu-conotoxins block voltage-gated sodium channels. This toxin reversibly blocks voltage-gated sodium channel in cephalopods, with no alteration in the voltage dependence of sodium conductance or on the kinetics of inactivation. The chain is Mu-conotoxin-like Cal 12.1.2d from Californiconus californicus (California cone).